A 427-amino-acid chain; its full sequence is MESLTLQPIARVDGAINLPGSKSVSNRALLLAALACGKTVLTNLLDSDDVRHMLNALSALGINYTLSADRTRCDITGNGGPLRASGTLELFLGNAGTAMRPLAAALCLGQNEIVLTGEPRMKERPIGHLVDSLRQGGANIDYLEQENYPPLRLRGGFIGGDIEVDGSVSSQFLTALLMTAPLAPEDTIIRVKGELVSKPYIDITLNLMKTFGVEIANHHYQQFVVKGGQQYHSPGRYLVEGDASSASYFLAAGAIKGGTVKVTGIGRKSMQGDIRFADVLEKMGATITWGDDFIACTRGELHAIDMDMNHIPDAAMTIATTALFAKGTTTLRNIYNWRVKETDRLFAMATELRKVGAEVEEGHDYIRITPPAKLQHADIGTYNDHRMAMCFSLVALSDTPVTILDPKCTAKTFPDYFEQLARMSTPA.

Positions 22, 23, and 27 each coordinate 3-phosphoshikimate. K22 contributes to the phosphoenolpyruvate binding site. G96 and R124 together coordinate phosphoenolpyruvate. 3-phosphoshikimate is bound by residues S169, S170, Q171, S197, D313, N336, and K340. Q171 contributes to the phosphoenolpyruvate binding site. D313 functions as the Proton acceptor in the catalytic mechanism. Phosphoenolpyruvate is bound by residues R344, R386, and K411.

It belongs to the EPSP synthase family. Monomer.

Its subcellular location is the cytoplasm. The catalysed reaction is 3-phosphoshikimate + phosphoenolpyruvate = 5-O-(1-carboxyvinyl)-3-phosphoshikimate + phosphate. It functions in the pathway metabolic intermediate biosynthesis; chorismate biosynthesis; chorismate from D-erythrose 4-phosphate and phosphoenolpyruvate: step 6/7. Its function is as follows. Catalyzes the transfer of the enolpyruvyl moiety of phosphoenolpyruvate (PEP) to the 5-hydroxyl of shikimate-3-phosphate (S3P) to produce enolpyruvyl shikimate-3-phosphate and inorganic phosphate. This Salmonella typhi protein is 3-phosphoshikimate 1-carboxyvinyltransferase.